The primary structure comprises 119 residues: Large ribosomal subunit protein uL18 (119 aa).

It belongs to the universal ribosomal protein uL18 family. As to quaternary structure, part of the 50S ribosomal subunit; part of the 5S rRNA/L5/L18/L25 subcomplex. Contacts the 5S and 23S rRNAs.

This is one of the proteins that bind and probably mediate the attachment of the 5S RNA into the large ribosomal subunit, where it forms part of the central protuberance. The polypeptide is Large ribosomal subunit protein uL18 (Borrelia recurrentis (strain A1)).